The primary structure comprises 283 residues: 4-diphosphocytidyl-2-C-methyl-D-erythritol kinase (283 aa).

The active site involves Lys-10. An ATP-binding site is contributed by 99-109; it reads PMGGGLGGGSS. The active site involves Asp-141.

This sequence belongs to the GHMP kinase family. IspE subfamily. Homodimer.

The enzyme catalyses 4-CDP-2-C-methyl-D-erythritol + ATP = 4-CDP-2-C-methyl-D-erythritol 2-phosphate + ADP + H(+). It functions in the pathway isoprenoid biosynthesis; isopentenyl diphosphate biosynthesis via DXP pathway; isopentenyl diphosphate from 1-deoxy-D-xylulose 5-phosphate: step 3/6. Its function is as follows. Catalyzes the phosphorylation of the position 2 hydroxy group of 4-diphosphocytidyl-2C-methyl-D-erythritol. This chain is 4-diphosphocytidyl-2-C-methyl-D-erythritol kinase, found in Salmonella paratyphi C (strain RKS4594).